The primary structure comprises 363 residues: Phosphoribosylformylglycinamidine cyclo-ligase (363 aa).

The protein belongs to the AIR synthase family.

It localises to the cytoplasm. It catalyses the reaction 2-formamido-N(1)-(5-O-phospho-beta-D-ribosyl)acetamidine + ATP = 5-amino-1-(5-phospho-beta-D-ribosyl)imidazole + ADP + phosphate + H(+). It participates in purine metabolism; IMP biosynthesis via de novo pathway; 5-amino-1-(5-phospho-D-ribosyl)imidazole from N(2)-formyl-N(1)-(5-phospho-D-ribosyl)glycinamide: step 2/2. This Brucella anthropi (strain ATCC 49188 / DSM 6882 / CCUG 24695 / JCM 21032 / LMG 3331 / NBRC 15819 / NCTC 12168 / Alc 37) (Ochrobactrum anthropi) protein is Phosphoribosylformylglycinamidine cyclo-ligase.